A 1051-amino-acid chain; its full sequence is Kinesin-like protein KIN-UC (1051 aa).

Low complexity-rich tracts occupy residues 1–12 (MSSSNSSSAVRS), 28–39 (NSNHAVSLSSSS), and 64–90 (SASS…PVRR). Disordered stretches follow at residues 1–39 (MSSS…SSSS) and 51–109 (PGIA…RVSV). A Kinesin motor domain is found at 104–441 (RVRVSVRVRP…IMFGQRAMKI (338 aa)). 189–196 (GQTGTGKT) provides a ligand contact to ATP. A D-BOX motif is present at residues 411–419 (RTSLIITIG). 2 coiled-coil regions span residues 452 to 534 (DYES…QKDQ) and 568 to 761 (DTSQ…KRYM). Positions 753-766 (NVVEEKRYMKEDLS) are enriched in basic and acidic residues. The segment at 753–788 (NVVEEKRYMKEDLSKGSAESGAQTGSQRSQGLKKSL) is disordered. Polar residues predominate over residues 772-788 (SGAQTGSQRSQGLKKSL). 3 ARM repeats span residues 792-831 (RATM…NLAA), 833-873 (EANQ…NLAM), and 875-915 (EKSQ…NLCG). The stretch at 917-956 (EKFLKLLKEEEGIKGLLTMAQSGNIDIIAQVARGMANFAK) is one ARM 4; degenerate repeat.

This sequence belongs to the TRAFAC class myosin-kinesin ATPase superfamily. Kinesin family. Ungrouped subfamily. Interacts (via C-terminus) with NEK5. Expressed in young root hair-forming cells and in root hair-producing cells at the boundary between the hypocotyl and root. Expressed in cotyledons, young leaves, trichomes and flowers.

Its subcellular location is the cytoplasm. It localises to the cytoskeleton. It is found in the spindle. The protein resides in the phragmoplast. Its function is as follows. Acts as a plus-end microtubule-dependent motor protein. Involved in the control of root hair tip growth by promoting microtubule depolymerization and limiting the accumulation of endoplasmic microtubules. In vitro, binds to polymerized actin through ARM repeats, and to polymerized tubulin through N-terminal motor domain. The protein is Kinesin-like protein KIN-UC of Arabidopsis thaliana (Mouse-ear cress).